The following is an 862-amino-acid chain: Eukaryotic translation initiation factor 3 subunit C (862 aa).

The span at 1-10 shows a compositional bias: gly residues; that stretch reads MSRFFYGGGS. Residues 1–81 are disordered; that stretch reads MSRFFYGGGS…DEEKTTVVKS (81 aa). Positions 16 to 52 are enriched in acidic residues; the sequence is SSDEEELYERDEEEQSEEEESSEEEETSEEGSDDEEG. The region spanning 601–775 is the PCI domain; it reads FHMHINLELL…GAIVFRKGVE (175 aa). A disordered region spans residues 814-862; it reads RDQGAGARGGRGGGRGGHARGGARFPGQQGRRPGGQQFGGGALGGAIKA. The span at 819–833 shows a compositional bias: gly residues; sequence GARGGRGGGRGGHAR. Residues 835 to 844 show a composition bias toward low complexity; that stretch reads GARFPGQQGR. Residues 845 to 862 are compositionally biased toward gly residues; it reads RPGGQQFGGGALGGAIKA.

The protein belongs to the eIF-3 subunit C family. Component of the eukaryotic translation initiation factor 3 (eIF-3) complex.

The protein localises to the cytoplasm. Its function is as follows. Component of the eukaryotic translation initiation factor 3 (eIF-3) complex, which is involved in protein synthesis of a specialized repertoire of mRNAs and, together with other initiation factors, stimulates binding of mRNA and methionyl-tRNAi to the 40S ribosome. The eIF-3 complex specifically targets and initiates translation of a subset of mRNAs involved in cell proliferation. In Aspergillus clavatus (strain ATCC 1007 / CBS 513.65 / DSM 816 / NCTC 3887 / NRRL 1 / QM 1276 / 107), this protein is Eukaryotic translation initiation factor 3 subunit C (nip1).